Reading from the N-terminus, the 205-residue chain is Isochorismatase domain-containing protein 2 (205 aa).

Belongs to the isochorismatase family. In terms of assembly, interacts with CDKN2A.

The protein resides in the cytoplasm. The protein localises to the nucleus. The protein is Isochorismatase domain-containing protein 2 (ISOC2) of Macaca fascicularis (Crab-eating macaque).